The chain runs to 341 residues: Adenosine deaminase (341 aa).

His-15 and His-17 together coordinate Zn(2+). 3 residues coordinate substrate: His-17, Asp-19, and Gly-172. Position 199 (His-199) interacts with Zn(2+). Glu-202 (proton donor) is an active-site residue. A Zn(2+)-binding site is contributed by Asp-279.

It belongs to the metallo-dependent hydrolases superfamily. Adenosine and AMP deaminases family. Adenosine deaminase subfamily. Requires Zn(2+) as cofactor.

The catalysed reaction is adenosine + H2O + H(+) = inosine + NH4(+). It carries out the reaction 2'-deoxyadenosine + H2O + H(+) = 2'-deoxyinosine + NH4(+). Catalyzes the hydrolytic deamination of adenosine and 2-deoxyadenosine. This chain is Adenosine deaminase, found in Streptococcus equi subsp. zooepidemicus (strain MGCS10565).